A 71-amino-acid polypeptide reads, in one-letter code: General transcription and DNA repair factor IIH subunit TFB5 (71 aa).

It belongs to the TFB5 family. In terms of assembly, component of the 7-subunit TFIIH core complex composed of XPB, XPD, TFB1/GTF2H1, GTF2H2/P44, TFB4/GTF2H3, TFB2/GTF2H4 and TFB5/GTF2H5, which is active in NER. The core complex associates with the 3-subunit CDK-activating kinase (CAK) module composed of CYCH1/cyclin H1, CDKD and MAT1/At4g30820 to form the 10-subunit holoenzyme (holo-TFIIH) active in transcription.

It is found in the nucleus. Functionally, component of the general transcription and DNA repair factor IIH (TFIIH) core complex, which is involved in general and transcription-coupled nucleotide excision repair (NER) of damaged DNA and, when complexed to CAK, in RNA transcription by RNA polymerase II. In NER, TFIIH acts by opening DNA around the lesion to allow the excision of the damaged oligonucleotide and its replacement by a new DNA fragment. In transcription, TFIIH has an essential role in transcription initiation. When the pre-initiation complex (PIC) has been established, TFIIH is required for promoter opening and promoter escape. Phosphorylation of the C-terminal tail (CTD) of the largest subunit of RNA polymerase II by the kinase module CAK controls the initiation of transcription. This chain is General transcription and DNA repair factor IIH subunit TFB5, found in Arabidopsis thaliana (Mouse-ear cress).